We begin with the raw amino-acid sequence, 1154 residues long: DNA-directed RNA polymerase subunit beta (1154 aa).

The segment covering 1108 to 1123 has biased composition (basic and acidic residues); that stretch reads ELGIDIQGEDRSERAG. Residues 1108–1136 form a disordered region; the sequence is ELGIDIQGEDRSERAGEPASPDEMDDEEE. Positions 1127-1136 are enriched in acidic residues; that stretch reads SPDEMDDEEE.

It belongs to the RNA polymerase beta chain family. The RNAP catalytic core consists of 2 alpha, 1 beta, 1 beta' and 1 omega subunit. When a sigma factor is associated with the core the holoenzyme is formed, which can initiate transcription.

It catalyses the reaction RNA(n) + a ribonucleoside 5'-triphosphate = RNA(n+1) + diphosphate. Functionally, DNA-dependent RNA polymerase catalyzes the transcription of DNA into RNA using the four ribonucleoside triphosphates as substrates. The sequence is that of DNA-directed RNA polymerase subunit beta from Heliobacterium modesticaldum (strain ATCC 51547 / Ice1).